Consider the following 229-residue polypeptide: Protein FMP52-2, mitochondrial (229 aa).

A mitochondrion-targeting transit peptide spans 1–45 (MAAGAFILGSTGLCGYQMLRFAEKSSLFDKISTVGRKLPDFKSEK).

This sequence belongs to the FMP52 family.

The protein resides in the mitochondrion outer membrane. This is Protein FMP52-2, mitochondrial (FMP522) from Scheffersomyces stipitis (strain ATCC 58785 / CBS 6054 / NBRC 10063 / NRRL Y-11545) (Yeast).